Here is an 811-residue protein sequence, read N- to C-terminus: Leucine--tRNA ligase (811 aa).

Positions 40-50 (PYPSGRLHMGH) match the 'HIGH' region motif. The 'KMSKS' region motif lies at 579–583 (KMSKS). K582 contacts ATP.

The protein belongs to the class-I aminoacyl-tRNA synthetase family.

The protein resides in the cytoplasm. It catalyses the reaction tRNA(Leu) + L-leucine + ATP = L-leucyl-tRNA(Leu) + AMP + diphosphate. In Campylobacter fetus subsp. fetus (strain 82-40), this protein is Leucine--tRNA ligase.